We begin with the raw amino-acid sequence, 226 residues long: DNA mismatch repair protein MutH (226 aa).

This sequence belongs to the MutH family.

It localises to the cytoplasm. Functionally, sequence-specific endonuclease that cleaves unmethylated GATC sequences. It is involved in DNA mismatch repair. This is DNA mismatch repair protein MutH from Actinobacillus pleuropneumoniae serotype 5b (strain L20).